The chain runs to 61 residues: Small ribosomal subunit protein uS14B (61 aa).

The Zn(2+) site is built by C24, C27, C40, and C43.

This sequence belongs to the universal ribosomal protein uS14 family. Zinc-binding uS14 subfamily. Part of the 30S ribosomal subunit. Contacts proteins S3 and S10. Zn(2+) serves as cofactor.

In terms of biological role, binds 16S rRNA, required for the assembly of 30S particles and may also be responsible for determining the conformation of the 16S rRNA at the A site. This chain is Small ribosomal subunit protein uS14B, found in Bacillus licheniformis (strain ATCC 14580 / DSM 13 / JCM 2505 / CCUG 7422 / NBRC 12200 / NCIMB 9375 / NCTC 10341 / NRRL NRS-1264 / Gibson 46).